Here is a 502-residue protein sequence, read N- to C-terminus: Myocilin (502 aa).

A signal peptide spans 1–31 (MPSCAYCCSCGPKMPALQLLFLACLVWGMGA). Residues 82 to 183 (ADLESTKARV…QEVARLRRGQ (102 aa)) adopt a coiled-coil conformation. Positions 166–198 (ARRLEGSSQEVARLRRGQCPSTHHPSQDMLPGS) are disordered. N229 is a glycosylation site (N-linked (GlcNAc...) asparagine). In terms of domain architecture, Olfactomedin-like spans 242-501 (GCGVLMWVGE…MVTYDIKLSE (260 aa)). C243 and C431 form a disulfide bridge. D378, N426, A427, V475, and D476 together coordinate Ca(2+).

Homodimer (via N-terminus). Can also form higher oligomers. Interacts with OLFM3, FN1, NRCAM, GLDN and NFASC. Interacts (via N-terminus) with MYL2. Interacts with SFRP1, FRZB, FZD7, FZD10, FZD1 and WIF1; regulates Wnt signaling. Interacts with SNTA1; regulates muscle hypertrophy. Interacts with ERBB2 and ERBB3; activates ERBB2-ERBB3 signaling pathway. Interacts with SNCG; affects its secretion and its aggregation. Palmitoylated. Post-translationally, undergoes a calcium-dependent proteolytic cleavage at Gln-225 by CAPN2 in the endoplasmic reticulum. The result is the production of two fragments, one of 35 kDa containing the C-terminal olfactomedin-like domain, and another of 20 kDa containing the N-terminal leucine zipper-like domain. In terms of processing, glycosylated. As to expression, highly expressed in skeletal muscle and retina. Also detected at lower levels in thyroid gland but not in other endocrine glands such as the adrenal or pituitary glands.

Its subcellular location is the secreted. The protein localises to the golgi apparatus. It is found in the cytoplasmic vesicle. The protein resides in the extracellular space. It localises to the extracellular matrix. Its subcellular location is the extracellular exosome. The protein localises to the mitochondrion. It is found in the mitochondrion intermembrane space. The protein resides in the mitochondrion inner membrane. It localises to the mitochondrion outer membrane. Its subcellular location is the rough endoplasmic reticulum. The protein localises to the cell projection. It is found in the cilium. The protein resides in the endoplasmic reticulum. Functionally, secreted glycoprotein regulating the activation of different signaling pathways in adjacent cells to control different processes including cell adhesion, cell-matrix adhesion, cytoskeleton organization and cell migration. Promotes substrate adhesion, spreading and formation of focal contacts. Negatively regulates cell-matrix adhesion and stress fiber assembly through Rho protein signal transduction. Modulates the organization of actin cytoskeleton by stimulating the formation of stress fibers through interactions with components of Wnt signaling pathways. Promotes cell migration through activation of PTK2 and the downstream phosphatidylinositol 3-kinase signaling. Plays a role in bone formation and promotes osteoblast differentiation in a dose-dependent manner through mitogen-activated protein kinase signaling. Mediates myelination in the peripheral nervous system through ERBB2/ERBB3 signaling. Plays a role as a regulator of muscle hypertrophy through the components of dystrophin-associated protein complex. Involved in positive regulation of mitochondrial depolarization. Plays a role in neurite outgrowth. May participate in the obstruction of fluid outflow in the trabecular meshwork. The polypeptide is Myocilin (Myoc) (Rattus norvegicus (Rat)).